The primary structure comprises 1235 residues: Bromodomain-containing protein 8 (1235 aa).

Residue Lys-85 is modified to N6-acetyllysine. Positions 97-171 (VRKLTAERVE…ATDAAYQARQ (75 aa)) form a coiled coil. Position 124 is a phosphothreonine (Arg-124). 2 positions are modified to phosphoserine: Leu-128 and Asp-144. Residues 186–205 (RSPIDSASPGGDYPLGDLTP) are disordered. Ala-264 is modified (phosphothreonine). Phosphoserine occurs at positions 268, 284, 383, and 387. Residue Lys-469 forms a Glycyl lysine isopeptide (Lys-Gly) (interchain with G-Cter in SUMO2) linkage. At Lys-481 the chain carries N6-acetyllysine; alternate. Lys-481 is covalently cross-linked (Glycyl lysine isopeptide (Lys-Gly) (interchain with G-Cter in SUMO1); alternate). Lys-481 is covalently cross-linked (Glycyl lysine isopeptide (Lys-Gly) (interchain with G-Cter in SUMO2); alternate). Glycyl lysine isopeptide (Lys-Gly) (interchain with G-Cter in SUMO2) cross-links involve residues Lys-509 and Lys-575. Positions 551–597 (TAAGEIVEADVAIGKGDETPLTNVKTEASPESMLSPSHGSNPIEDPL) are disordered. Ser-579 is modified (phosphoserine). Lys-612 is covalently cross-linked (Glycyl lysine isopeptide (Lys-Gly) (interchain with G-Cter in SUMO2)). Phosphoserine occurs at positions 621, 637, and 641. The interval 621–672 (SQIKDAPGEDEEEDGVSEAASLEEPKEEDQGEGYLSEMDNEPPVSESDDGFS) is disordered. One can recognise a Bromo 1 domain in the interval 706–811 (IQAQKIWKKA…RDVLEQIQQF (106 aa)). Disordered stretches follow at residues 827–848 (AKSLRGRDSTRKQDASEKDSVP), 903–940 (ETEDPEAEELEESSPEREPSELLVGDGGSEESQEAARK), and 966–999 (ESSEGCCPPSGTRQEGREIKASEGERELCRETEE). The segment covering 831–846 (RGRDSTRKQDASEKDS) has biased composition (basic and acidic residues). Acidic residues predominate over residues 905–915 (EDPEAEELEES). Leu-924 bears the Phosphoserine mark. Basic and acidic residues predominate over residues 979 to 999 (QEGREIKASEGERELCRETEE). The region spanning 1099-1207 (DDPVQDHLLF…QEVLEQIQVL (109 aa)) is the Bromo 2 domain.

Component of the NuA4 histone acetyltransferase complex which contains the catalytic subunit KAT5/TIP60 and the subunits EP400, TRRAP/PAF400, BRD8/SMAP, EPC1, DMAP1/DNMAP1, RUVBL1/TIP49, RUVBL2, ING3, actin, ACTL6A/BAF53A, MORF4L1/MRG15, MORF4L2/MRGX, MRGBP, YEATS4/GAS41, VPS72/YL1 and MEAF6. The NuA4 complex interacts with MYC and the adenovirus E1A protein. Component of a NuA4-related complex which contains EP400, TRRAP/PAF400, SRCAP, BRD8/SMAP, EPC1, DMAP1/DNMAP1, RUVBL1/TIP49, RUVBL2, actin, ACTL6A/BAF53A, VPS72 and YEATS4/GAS41. BRD8 isoform 2 interacts with RXRA/NR2B1 and THRB/ERBA2. Component of a SWR1-like complex. As to expression, expressed in adipose tissue, brain, heart, kidney, liver, lung, pancreas, placenta and skeletal muscle.

It is found in the nucleus. In terms of biological role, may act as a coactivator during transcriptional activation by hormone-activated nuclear receptors (NR). Isoform 2 stimulates transcriptional activation by AR/DHTR, ESR1/NR3A1, RXRA/NR2B1 and THRB/ERBA2. At least isoform 1 and isoform 2 are components of the NuA4 histone acetyltransferase (HAT) complex which is involved in transcriptional activation of select genes principally by acetylation of nucleosomal histones H4 and H2A. This modification may both alter nucleosome - DNA interactions and promote interaction of the modified histones with other proteins which positively regulate transcription. This complex may be required for the activation of transcriptional programs associated with oncogene and proto-oncogene mediated growth induction, tumor suppressor mediated growth arrest and replicative senescence, apoptosis, and DNA repair. NuA4 may also play a direct role in DNA repair when recruited to sites of DNA damage. Component of a SWR1-like complex that specifically mediates the removal of histone H2A.Z/H2AZ1 from the nucleosome. The sequence is that of Bromodomain-containing protein 8 (BRD8) from Homo sapiens (Human).